A 185-amino-acid polypeptide reads, in one-letter code: Riboflavin kinase (185 aa).

Positions 41 and 43 each coordinate Mg(2+). The Nucleophile role is filled by Glu122.

This sequence belongs to the flavokinase family. Zn(2+) is required as a cofactor. Mg(2+) serves as cofactor.

The catalysed reaction is riboflavin + ATP = FMN + ADP + H(+). Its pathway is cofactor biosynthesis; FMN biosynthesis; FMN from riboflavin (ATP route): step 1/1. Catalyzes the phosphorylation of riboflavin (vitamin B2) to form flavin mononucleotide (FMN) coenzyme. The chain is Riboflavin kinase (FMN1) from Kluyveromyces lactis (strain ATCC 8585 / CBS 2359 / DSM 70799 / NBRC 1267 / NRRL Y-1140 / WM37) (Yeast).